Here is a 247-residue protein sequence, read N- to C-terminus: GTP cyclohydrolase 1 type 2 homolog (247 aa).

Residues His-63, His-64, Asp-101, His-215, and Glu-219 each coordinate a divalent metal cation.

Belongs to the GTP cyclohydrolase I type 2/NIF3 family. Toroid-shaped homohexamer. In the hexamer, 3 dimers assemble to form a ring-like structure surrounding a central hole.

Provides significant protection from radiation damage and may be involved in the degradation of radiation-damaged nucleotides. This chain is GTP cyclohydrolase 1 type 2 homolog (ybgI), found in Escherichia coli O157:H7.